Consider the following 634-residue polypeptide: Sodium-dependent neutral amino acid transporter B(0)AT1 (634 aa).

Residues 1–41 are Cytoplasmic-facing; sequence MVRLVLPNPGLDARIPSLAELETIEQEEASSRPKWDNKAQY. Serine 17 carries the post-translational modification Phosphoserine. The chain crosses the membrane as a helical span at residues 42–62; it reads MLTCLGFCVGLGNVWRFPYLC. Residues 63–67 are Extracellular-facing; it reads QSHGG. Residues 68-88 form a helical membrane-spanning segment; that stretch reads GAFMIPFLILLVLEGIPLLYL. At 89–120 the chain is on the cytoplasmic side; that stretch reads EFAIGQRLRRGSLGVWSSIHPALKGLGLASML. The chain crosses the membrane as a helical span at residues 121–141; sequence TSFMVGLYYNTIISWIMWYLF. The Extracellular portion of the chain corresponds to 142–192; the sequence is NSFQEPLPWSDCPLNENQTGYVDECARSSPVDYFWYRETLNISTSISDSGS. Asparagine 158 and asparagine 182 each carry an N-linked (GlcNAc...) asparagine glycan. The helical transmembrane segment at 193-213 threads the bilayer; that stretch reads IQWWMLLCLACAWSVLYMCTI. Topologically, residues 214–221 are cytoplasmic; it reads RGIETTGK. The helical transmembrane segment at 222–242 threads the bilayer; it reads AVYITSTLPYVVLTIFLIRGL. The Extracellular segment spans residues 243-268; sequence TLKGATNGIVFLFTPNVTELAQPDTW. An N-linked (GlcNAc...) asparagine glycan is attached at asparagine 258. Residues 269 to 289 form a helical membrane-spanning segment; that stretch reads LDAGAQVFFSFSLAFGGLISF. The Cytoplasmic segment spans residues 290–304; the sequence is SSYNSVHNNCEKDSV. A helical transmembrane segment spans residues 305–325; sequence IVSIINGFTSVYVAIVVYSVI. The Extracellular segment spans residues 326–413; the sequence is GFRATQRYDD…TEAITKMPLS (88 aa). 2 N-linked (GlcNAc...) asparagine glycosylation sites follow: asparagine 354 and asparagine 368. Residues 414 to 434 form a helical membrane-spanning segment; sequence PLWSVLFFIMLFCLGLSSMFG. At 435 to 456 the chain is on the cytoplasmic side; that stretch reads NMEGVVVPLQDLRVIPPKWPKE. The chain crosses the membrane as a helical span at residues 457–477; the sequence is VLTGLICLGTFLIGFIFTLNS. Residues 478–490 lie on the Extracellular side of the membrane; sequence GQYWLSLLDSYAG. Residues 491-511 form a helical membrane-spanning segment; sequence SIPLLIIAFCEMFSVVYVYGV. At 512–531 the chain is on the cytoplasmic side; sequence DRFNKDIEFMIGHKPNIFWQ. The helical transmembrane segment at 532 to 552 threads the bilayer; sequence VTWRVVSPLLMLIIFLFFFVV. Over 553 to 581 the chain is Extracellular; the sequence is EVSQELTYSIWDPGYEEFPKSQKISYPNW. The chain crosses the membrane as a helical span at residues 582 to 602; the sequence is VYVVVVIVAGVPSLTIPGYAI. Residues 603-634 lie on the Cytoplasmic side of the membrane; sequence YKLIRNHCQKPGDHQGLVSTLSTASMNGDLKY. Phosphoserine is present on serine 627.

This sequence belongs to the sodium:neurotransmitter symporter (SNF) (TC 2.A.22) family. SLC6A19 subfamily. In terms of assembly, interacts in a tissue-specific manner with ACE2 in small intestine and with CLTRN in the kidney. Interacts with CLTRN; this interaction is required for trafficking of SLC6A19 to the plasma membrane and for its catalytic activation in kidneys. Interacts with ACE2; this interaction is required for trafficking of SLC6A19 to the plasma membrane and for its catalytic activation in intestine. Interacts with ANPEP; the interaction positively regulates its amino acid transporter activity. In terms of tissue distribution, robust expression in kidney and small intestine, with minimal expression in pancreas. Also expressed in stomach, liver, duodenum, ileocecum, colon and prostate. Not detected in testis, whole brain, cerebellum, fetal liver, spleen, skeletal muscle, uterus, heart or lung.

It is found in the cell membrane. The protein localises to the apical cell membrane. It carries out the reaction L-alanine(in) + Na(+)(in) = L-alanine(out) + Na(+)(out). It catalyses the reaction L-cysteine(in) + Na(+)(in) = L-cysteine(out) + Na(+)(out). The catalysed reaction is L-glutamine(in) + Na(+)(in) = L-glutamine(out) + Na(+)(out). The enzyme catalyses glycine(in) + Na(+)(in) = glycine(out) + Na(+)(out). It carries out the reaction L-isoleucine(in) + Na(+)(in) = L-isoleucine(out) + Na(+)(out). It catalyses the reaction L-leucine(in) + Na(+)(in) = L-leucine(out) + Na(+)(out). The catalysed reaction is L-methionine(in) + Na(+)(in) = L-methionine(out) + Na(+)(out). The enzyme catalyses L-phenylalanine(in) + Na(+)(in) = L-phenylalanine(out) + Na(+)(out). It carries out the reaction L-serine(in) + Na(+)(in) = L-serine(out) + Na(+)(out). It catalyses the reaction L-tryptophan(in) + Na(+)(in) = L-tryptophan(out) + Na(+)(out). The catalysed reaction is L-tyrosine(in) + Na(+)(in) = L-tyrosine(out) + Na(+)(out). The enzyme catalyses L-valine(in) + Na(+)(in) = L-valine(out) + Na(+)(out). Functionally, transporter that mediates resorption of neutral amino acids across the apical membrane of renal and intestinal epithelial cells. This uptake is sodium-dependent and chloride-independent. Requires CLTRN in kidney or ACE2 in intestine for cell surface expression and amino acid transporter activity. The protein is Sodium-dependent neutral amino acid transporter B(0)AT1 (SLC6A19) of Homo sapiens (Human).